A 282-amino-acid chain; its full sequence is Large ribosomal subunit protein uL2 (282 aa).

2 disordered regions span residues 31-54 and 223-282; these read KRLT…TRHI and LAMN…NTQR. 2 stretches are compositionally biased toward basic residues: residues 34–54 and 270–282; these read TKPV…TRHI and VTRR…NTQR.

It belongs to the universal ribosomal protein uL2 family. In terms of assembly, part of the 50S ribosomal subunit. Forms a bridge to the 30S subunit in the 70S ribosome.

In terms of biological role, one of the primary rRNA binding proteins. Required for association of the 30S and 50S subunits to form the 70S ribosome, for tRNA binding and peptide bond formation. It has been suggested to have peptidyltransferase activity; this is somewhat controversial. Makes several contacts with the 16S rRNA in the 70S ribosome. This chain is Large ribosomal subunit protein uL2, found in Anaeromyxobacter dehalogenans (strain 2CP-1 / ATCC BAA-258).